Consider the following 232-residue polypeptide: MRGEEEPAVAAAAYTTASKAGLLMELSPPNHESSPPTAGGGGGGGGDGAGGSSSAGASSSAGGGAATPQTPSRYEAQKRRDWNTFGQYLRNHRPPLGLAQCSGAHVLEFLRYLDQFGKTKVHTAACPFFGHPNPPAPCPCPLRQAWGSLDALVGRLRAAFEENGGRPESNPFAVRAVRLYLREVREHQARARGVSYEKKKRKKPQPADTSGGGGHPHPPPPPPPPPSAGAAC.

Disordered stretches follow at residues Ala-20–Gln-77 and Ala-189–Cys-232. Residues Ala-38–Ser-53 show a composition bias toward gly residues. Positions Arg-73 to Lys-200 constitute an ALOG domain. Residues Lys-198–Lys-202 carry the Nuclear localization signal motif. The span at Pro-216–Cys-232 shows a compositional bias: pro residues.

It belongs to the plant homeotic and developmental regulators ALOG protein family.

It localises to the nucleus. Its function is as follows. Probable transcription regulator that acts as a developmental regulator by promoting cell growth in response to light. This Oryza sativa subsp. indica (Rice) protein is Protein G1-like3.